A 431-amino-acid polypeptide reads, in one-letter code: Adenylosuccinate synthetase (431 aa).

GTP-binding positions include 12 to 18 (GDEGKGK) and 40 to 42 (GHT). Residue aspartate 13 is the Proton acceptor of the active site. Aspartate 13 and glycine 40 together coordinate Mg(2+). IMP-binding positions include 13–16 (DEGK), 38–41 (NAGH), threonine 131, arginine 145, glutamine 225, threonine 240, and arginine 304. Histidine 41 functions as the Proton donor in the catalytic mechanism. 300–306 (TTTGRKR) lines the substrate pocket. Residues arginine 306, 332 to 334 (KLD), and 414 to 416 (STS) each bind GTP.

Belongs to the adenylosuccinate synthetase family. As to quaternary structure, homodimer. Mg(2+) is required as a cofactor.

It is found in the cytoplasm. It carries out the reaction IMP + L-aspartate + GTP = N(6)-(1,2-dicarboxyethyl)-AMP + GDP + phosphate + 2 H(+). It functions in the pathway purine metabolism; AMP biosynthesis via de novo pathway; AMP from IMP: step 1/2. Functionally, plays an important role in the de novo pathway of purine nucleotide biosynthesis. Catalyzes the first committed step in the biosynthesis of AMP from IMP. The polypeptide is Adenylosuccinate synthetase (Jannaschia sp. (strain CCS1)).